A 453-amino-acid polypeptide reads, in one-letter code: Argininosuccinate lyase (453 aa).

This sequence belongs to the lyase 1 family. Argininosuccinate lyase subfamily.

The protein localises to the cytoplasm. It carries out the reaction 2-(N(omega)-L-arginino)succinate = fumarate + L-arginine. It functions in the pathway amino-acid biosynthesis; L-arginine biosynthesis; L-arginine from L-ornithine and carbamoyl phosphate: step 3/3. This Shewanella loihica (strain ATCC BAA-1088 / PV-4) protein is Argininosuccinate lyase.